Here is a 117-residue protein sequence, read N- to C-terminus: MAGLMKLACLVLACMIVAGPITSNAALSCGTVSGYVAPCIGYLTQNGPLPRGCCTGVTNLNNMARTTPDRQQACRCLVGAANSFPTLNAARAAGLPKACGVNIPYKISKSTNCNSVR.

Positions 1 to 25 (MAGLMKLACLVLACMIVAGPITSNA) are cleaved as a signal peptide. 4 disulfides stabilise this stretch: cysteine 29-cysteine 76, cysteine 39-cysteine 53, cysteine 54-cysteine 99, and cysteine 74-cysteine 113.

The protein belongs to the plant LTP family.

Plant non-specific lipid-transfer proteins transfer phospholipids as well as galactolipids across membranes. May play a role in wax or cutin deposition in the cell walls of expanding epidermal cells and certain secretory tissues. The chain is Non-specific lipid-transfer protein 2 (LTP2) from Brassica napus (Rape).